A 492-amino-acid polypeptide reads, in one-letter code: Probable malate:quinone oxidoreductase (492 aa).

It belongs to the MQO family. The cofactor is FAD.

It carries out the reaction (S)-malate + a quinone = a quinol + oxaloacetate. It participates in carbohydrate metabolism; tricarboxylic acid cycle; oxaloacetate from (S)-malate (quinone route): step 1/1. This Methylobacillus flagellatus (strain ATCC 51484 / DSM 6875 / VKM B-1610 / KT) protein is Probable malate:quinone oxidoreductase.